The chain runs to 100 residues: MNLTPREKDKLLIAMAAMVARRRLERGVKLNHPEAIALVSDFVVEGARDGRTVAELMEAGAHVITREQVMDGVAEMIRDIQVEATFPDGTKLVTVHEPIR.

Belongs to the urease gamma subunit family. In terms of assembly, heterotrimer of UreA (gamma), UreB (beta) and UreC (alpha) subunits. Three heterotrimers associate to form the active enzyme.

It is found in the cytoplasm. It carries out the reaction urea + 2 H2O + H(+) = hydrogencarbonate + 2 NH4(+). Its pathway is nitrogen metabolism; urea degradation; CO(2) and NH(3) from urea (urease route): step 1/1. In terms of biological role, disruption of the ure1 gene cluster suggests that it protects brucellae during their passage through the stomach. The major route of infection in human brucellosis is oral. This chain is Urease subunit gamma 1, found in Brucella abortus (strain 2308).